We begin with the raw amino-acid sequence, 1168 residues long: ATP-dependent DNA helicase mph1 (1168 aa).

Polar residues-rich tracts occupy residues 24-38 (NITS…QLAS) and 59-68 (PTVSQGQATA). The segment at 24 to 132 (NITSHHPSNS…PFRADMPPEQ (109 aa)) is disordered. A compositionally biased stretch (low complexity) spans 71–88 (RAKTASKPTTSATTSRPS). Positions 89–104 (LAQSSQRKNLRQTTLW) are enriched in polar residues. The Helicase ATP-binding domain occupies 162-330 (IVKNGLFNNT…DVIDNLGISH (169 aa)). 175–182 (LPTGLGKT) contacts ATP. The short motif at 278 to 281 (DEAH) is the DEAH box element. In terms of domain architecture, Helicase C-terminal spans 506 to 665 (LVNHFMDAGE…GSRFTFRHDL (160 aa)). 2 disordered regions span residues 690–717 (SQNP…FNMP) and 830–1168 (APAN…DDQE). The segment covering 701-714 (SAARMRTKPAKKKF) has biased composition (basic residues). Positions 895 to 907 (TAKTKSTGVSKQT) are enriched in polar residues. The span at 920–936 (DCEEGGNEYDGNVDDDE) shows a compositional bias: acidic residues. Over residues 941-959 (RNFRSKGRGRGSGRGKKSQ) the composition is skewed to basic residues. Residues 985–996 (GSDDGADLEDFI) show a composition bias toward acidic residues. Polar residues predominate over residues 1001–1030 (EVTSSLQHRPRGSTSPTTAPDAGSSSLSSK).

It belongs to the DEAD box helicase family. DEAH subfamily. FANCM sub-subfamily. In terms of assembly, interacts with the MHF histone-fold complex to form the FANCM-MHF complex.

The protein localises to the nucleus. It catalyses the reaction ATP + H2O = ADP + phosphate + H(+). ATP-dependent DNA helicase involved in DNA damage repair by homologous recombination and in genome maintenance. Capable of unwinding D-loops. Plays a role in limiting crossover recombinants during mitotic DNA double-strand break (DSB) repair. Component of a FANCM-MHF complex which promotes gene conversion at blocked replication forks, probably by reversal of the stalled fork. In Neurospora crassa (strain ATCC 24698 / 74-OR23-1A / CBS 708.71 / DSM 1257 / FGSC 987), this protein is ATP-dependent DNA helicase mph1.